The sequence spans 103 residues: Large ribosomal subunit protein bL21 (103 aa).

The protein belongs to the bacterial ribosomal protein bL21 family. In terms of assembly, part of the 50S ribosomal subunit. Contacts protein L20.

In terms of biological role, this protein binds to 23S rRNA in the presence of protein L20. The sequence is that of Large ribosomal subunit protein bL21 from Chloroflexus aggregans (strain MD-66 / DSM 9485).